The chain runs to 367 residues: UDP-N-acetylglucosamine--N-acetylmuramyl-(pentapeptide) pyrophosphoryl-undecaprenol N-acetylglucosamine transferase (367 aa).

UDP-N-acetyl-alpha-D-glucosamine contacts are provided by residues 15–17, Asn127, Arg163, Ser191, Ile249, and Gln294; that span reads TGG.

It belongs to the glycosyltransferase 28 family. MurG subfamily.

The protein localises to the cell inner membrane. It carries out the reaction di-trans,octa-cis-undecaprenyl diphospho-N-acetyl-alpha-D-muramoyl-L-alanyl-D-glutamyl-meso-2,6-diaminopimeloyl-D-alanyl-D-alanine + UDP-N-acetyl-alpha-D-glucosamine = di-trans,octa-cis-undecaprenyl diphospho-[N-acetyl-alpha-D-glucosaminyl-(1-&gt;4)]-N-acetyl-alpha-D-muramoyl-L-alanyl-D-glutamyl-meso-2,6-diaminopimeloyl-D-alanyl-D-alanine + UDP + H(+). The protein operates within cell wall biogenesis; peptidoglycan biosynthesis. Functionally, cell wall formation. Catalyzes the transfer of a GlcNAc subunit on undecaprenyl-pyrophosphoryl-MurNAc-pentapeptide (lipid intermediate I) to form undecaprenyl-pyrophosphoryl-MurNAc-(pentapeptide)GlcNAc (lipid intermediate II). This chain is UDP-N-acetylglucosamine--N-acetylmuramyl-(pentapeptide) pyrophosphoryl-undecaprenol N-acetylglucosamine transferase, found in Burkholderia cenocepacia (strain ATCC BAA-245 / DSM 16553 / LMG 16656 / NCTC 13227 / J2315 / CF5610) (Burkholderia cepacia (strain J2315)).